Here is a 313-residue protein sequence, read N- to C-terminus: MMENYKHTTVLLDEAVNGLNIRPDGIYIDGTFGRGGHSRLILSQLGEEGRLLAIDRDPQAIAVAKTIDDPRFSIIHGPFSALGEYVAERDLIGKIDGILLDLGVSSPQLDDAERGFSFMRDGPLDMRMDPTRGQSAAEWLQTAEEADIAWVLKTYGEERFAKRIARAIVERNREQPMTRTKELAEVVAVATPVKDKFKHPATRTFQAVRIWVNSELEEIEQALKSSLNVLAPGGRLSIISFHSLEDRIVKRFMRENSRGPQVPAGLPMTEEQLKKLGGRQLRALGKLMPGEEEVAENPRARSSVLRIAERTNA.

Residues 35–37, D55, F79, D101, and Q108 each bind S-adenosyl-L-methionine; that span reads GGH.

It belongs to the methyltransferase superfamily. RsmH family.

The protein resides in the cytoplasm. The enzyme catalyses cytidine(1402) in 16S rRNA + S-adenosyl-L-methionine = N(4)-methylcytidine(1402) in 16S rRNA + S-adenosyl-L-homocysteine + H(+). In terms of biological role, specifically methylates the N4 position of cytidine in position 1402 (C1402) of 16S rRNA. This chain is Ribosomal RNA small subunit methyltransferase H, found in Shigella sonnei (strain Ss046).